The following is a 3412-amino-acid chain: Genome polyprotein (3412 aa).

The Cytoplasmic segment spans residues 1–104; the sequence is MSGRKAQGKT…LSSRKRRSNE (104 aa). Positions 38–72 are hydrophobic; homodimerization of capsid protein C; that stretch reads PGPSRGVQGFIFFFLFNILTGKKLTTHLKRLWRML. The propeptide at 102 to 121 is ER anchor for the capsid protein C, removed in mature form by serine protease NS3; the sequence is SNEMAMMPLLILSMVILAGG. Residues 105–125 form a helical membrane-spanning segment; it reads MAMMPLLILSMVILAGGVTLV. Topologically, residues 126-244 are extracellular; the sequence is RKNRWLLLNV…GERQLQKIER (119 aa). 2 N-linked (GlcNAc...) asparagine; by host glycosylation sites follow: Asn134 and Asn150. Residues 245–265 form a helical membrane-spanning segment; it reads WLVRNPFFAITALAIAYLVGN. Over 266–270 the chain is Cytoplasmic; sequence NMTQR. A helical membrane pass occupies residues 271–285; that stretch reads VVIALLVLAVGPAYS. The Extracellular segment spans residues 286-730; that stretch reads AHCIGITDRD…TVFGSAFQGL (445 aa). 8 cysteine pairs are disulfide-bonded: Cys288/Cys315, Cys345/Cys401, Cys345/Cys406, Cys359/Cys390, Cys377/Cys401, Cys377/Cys406, Cys467/Cys568, and Cys585/Cys615. Residues 383–396 are fusion peptide; the sequence is DRGWGNGCGLFGKG. Residues 731-751 form a helical membrane-spanning segment; that stretch reads FGGLSWITKVIMGAVLIWVGI. Topologically, residues 752–757 are extracellular; the sequence is NTRNMT. The helical transmembrane segment at 758–778 threads the bilayer; it reads MSMSMILVGVIMMFLSLGVGA. Residues 779–1132 lie on the Extracellular side of the membrane; that stretch reads DQGCAVNFGK…LVRSWVTAGE (354 aa). 6 disulfides stabilise this stretch: Cys782–Cys793, Cys833–Cys921, Cys957–Cys1002, Cys1058–Cys1107, Cys1069–Cys1091, and Cys1090–Cys1094. 2 N-linked (GlcNAc...) asparagine; by host glycosylation sites follow: Asn908 and Asn986. The helical transmembrane segment at 1133–1153 threads the bilayer; it reads VHAVPFGLVSMMIAMEVVLRK. Topologically, residues 1154–1201 are cytoplasmic; the sequence is RQGPKQMLVGGIILLGAMLVGQVTVLDLVKLIVAVGLHFHEINNGGDA. Residues 1202–1222 traverse the membrane as a helical segment; it reads MYMALIASFSIRPGLLVGFGL. At 1223–1287 the chain is on the lumenal side; sequence RTLWSPRERL…VLPLMALLTP (65 aa). A helical transmembrane segment spans residues 1288 to 1308; that stretch reads VTMHEVRMATMLFCTVVIVGV. Over 1309-1355 the chain is Cytoplasmic; sequence LHQNAKDTSMQKTIPIVALTLTSYMGLTQPFLGLCAYMSTQVFGRRS. The helical transmembrane segment at 1356 to 1376 threads the bilayer; it reads IPVNEALAAAGLVGVLAGLAF. Topologically, residues 1377–1378 are lumenal; that stretch reads QD. Residues 1379-1399 traverse the membrane as a helical segment; the sequence is MENFLGPIAVGGILMMLVSVA. The Cytoplasmic portion of the chain corresponds to 1400-1456; sequence GKVDGLELKKLGEVSWEEEAEISGSSSRYDVALSEQGEFKLLSEDKVPWDQIVMTSL. An interacts with and activates NS3 protease region spans residues 1407–1446; sequence LKKLGEVSWEEEAEISGSSSRYDVALSEQGEFKLLSEDKV. The segment at residues 1457-1477 is an intramembrane region (helical); sequence ALVGAAIHPFALLLVLGGWVL. Topologically, residues 1478–2157 are cytoplasmic; that stretch reads HIKGARRSGD…RNALSMMPEA (680 aa). Residues 1485–1665 form the Peptidase S7 domain; sequence SGDVLWDIPT…EVKEESKEEL (181 aa). Active-site charge relay system; for serine protease NS3 activity residues include His1537, Asp1561, and Ser1622. A Helicase ATP-binding domain is found at 1669 to 1825; it reads PTMLKKGMTT…HSNGEIEDVQ (157 aa). Positions 1673-1676 are important for RNA-binding; sequence KKGM. Residue 1682 to 1689 participates in ATP binding; sequence FHPGAGKT. The DEAH box motif lies at 1773-1776; sequence DEAH. The 178-residue stretch at 1820-1997 folds into the Helicase C-terminal domain; the sequence is EIEDVQTDIP…VRGGMVAPLY (178 aa). An N6-acetyllysine; by host modification is found at Lys1877. The interval 1942–1961 is disordered; the sequence is AAQRRGRIGRNPNRDGDSYY. A helical membrane pass occupies residues 2158–2178; that stretch reads MTIVMLFILAGLLTSGMVIFF. Residues 2179–2186 lie on the Lumenal side of the membrane; sequence MSPKGMSR. Residues 2187-2207 constitute an intramembrane region (helical); that stretch reads MSMAMGTMAGSGYLMFLGGVK. At 2208–2209 the chain is on the lumenal side; the sequence is PT. A helical transmembrane segment spans residues 2210–2230; sequence HISYVMLIFFVLMVVIIPEPG. The Cytoplasmic segment spans residues 2231–2241; it reads QQRTIQDNQVA. Residues 2242–2262 form a helical membrane-spanning segment; sequence YLIIGILTLLSIVAANELGML. The Lumenal portion of the chain corresponds to 2263–2293; that stretch reads EKTKEDFFGRRNIATSGGTIPWSWPDLDLKP. The helical intramembrane region spans 2294–2314; sequence GAAWTVYVGIVTMLSPMLHHW. Over 2315–2360 the chain is Lumenal; the sequence is IKVEYGNLSLSGIAQSASVLSFMDKGIPFMKMNISVVILLVSGWNS. Residues 2361-2380 traverse the membrane as a helical segment; sequence ITVIPLLCGVGGAMLHWTLI. Topologically, residues 2381–2421 are cytoplasmic; the sequence is LPGIKAQQSKLAQKRVFHGVAKNPVVDGNPTADIEEAPEMP. A helical transmembrane segment spans residues 2422–2442; that stretch reads ALYEKKLALYLLLALSLMSVA. Topologically, residues 2443-2445 are lumenal; sequence MCR. A helical membrane pass occupies residues 2446-2466; that stretch reads TPFSLAEGIVLSSAALGPLIE. Over 2467–3411 the chain is Cytoplasmic; that stretch reads GNTSLLWNGP…VDADLQPGEL (945 aa). Positions 2508-2772 constitute an mRNA cap 0-1 NS5-type MT domain; that stretch reads GSASGKTLGE…DVILPIGTRS (265 aa). Ser2563 provides a ligand contact to S-adenosyl-L-methionine. Position 2563 is a phosphoserine (Ser2563). Lys2568 acts as the For 2'-O-MTase activity in catalysis. S-adenosyl-L-methionine-binding residues include Gly2593, Trp2594, Thr2611, Leu2612, Asp2638, and Ile2639. Residue Asp2653 is the For 2'-O-MTase activity of the active site. Ile2654 is a binding site for S-adenosyl-L-methionine. Residues Lys2689 and Glu2725 each act as for 2'-O-MTase activity in the active site. Residue Tyr2727 coordinates S-adenosyl-L-methionine. The short motif at 2879–2912 is the Nuclear localization signal element; that stretch reads RKIMKVVNRWLFRHLAREKNPRLCTKEEFIAKVR. Residues Glu2946, His2950, Cys2955, and Cys2958 each coordinate Zn(2+). In terms of domain architecture, RdRp catalytic spans 3036 to 3188; that stretch reads GGFYADDTAG…RPVDDRFGLA (153 aa). Residues His3223, Cys3239, and Cys3358 each contribute to the Zn(2+) site.

In the N-terminal section; belongs to the class I-like SAM-binding methyltransferase superfamily. mRNA cap 0-1 NS5-type methyltransferase family. As to quaternary structure, homodimer. Interacts (via N-terminus) with host EXOC1 (via C-terminus); this interaction results in EXOC1 degradation through the proteasome degradation pathway. Forms heterodimers with envelope protein E in the endoplasmic reticulum and Golgi. In terms of assembly, homodimer; in the endoplasmic reticulum and Golgi. Interacts with protein prM. Interacts with non-structural protein 1. As to quaternary structure, homodimer; Homohexamer when secreted. Interacts with envelope protein E. Interacts (via N-terminus) with serine protease NS3. In terms of assembly, forms a heterodimer with serine protease NS3. May form homooligomers. As to quaternary structure, forms a heterodimer with NS2B. Interacts with non-structural protein 2A (via N-terminus). Interacts with NS4B. Interacts with unphosphorylated RNA-directed RNA polymerase NS5; this interaction stimulates RNA-directed RNA polymerase NS5 guanylyltransferase activity. NS3 interacts with host PDCD6IP; this interaction contributes to virion release. Interacts with serine protease NS3. In terms of assembly, homodimer. Interacts with host STAT2; this interaction prevents the establishment of cellular antiviral state. Interacts with serine protease NS3. Interacts with host TRIM23; this interaction leads to NS5 ubiquitination. In terms of processing, specific enzymatic cleavages in vivo yield mature proteins. The nascent capsid protein C contains a C-terminal hydrophobic domain that act as a signal sequence for translocation of prM into the lumen of the ER. Mature capsid protein C is cleaved at a site upstream of this hydrophobic domain by NS3. prM is cleaved in post-Golgi vesicles by a host furin, releasing the mature small envelope protein M, and peptide pr. Non-structural protein 2A-alpha, a C-terminally truncated form of non-structural protein 2A, results from partial cleavage by NS3. Specific enzymatic cleavages in vivo yield mature proteins peptide 2K acts as a signal sequence and is removed from the N-terminus of NS4B by the host signal peptidase in the ER lumen. Signal cleavage at the 2K-4B site requires a prior NS3 protease-mediated cleavage at the 4A-2K site. Cleaved in post-Golgi vesicles by a host furin, releasing the mature small envelope protein M, and peptide pr. This cleavage is incomplete as up to 30% of viral particles still carry uncleaved prM. Post-translationally, N-glycosylated. In terms of processing, N-glycosylated. The excreted form is glycosylated and this is required for efficient secretion of the protein from infected cells. Polyubiquitinated; ubiquitination is probably mediated by host TRIM23 and is prerequisite for NS5-STAT2 interaction. NS5 is not ISGylated or sumoylated. Post-translationally, acetylated by host KAT5. Acetylation modulates NS3 RNA-binding and unwinding activities and plays an important positive role for viral replication. In terms of processing, phosphorylated on serines residues. This phosphorylation may trigger NS5 nuclear localization.

The protein localises to the virion. The protein resides in the host nucleus. It localises to the host cytoplasm. Its subcellular location is the host perinuclear region. It is found in the secreted. The protein localises to the virion membrane. The protein resides in the host endoplasmic reticulum membrane. It carries out the reaction Selective hydrolysis of -Xaa-Xaa-|-Yaa- bonds in which each of the Xaa can be either Arg or Lys and Yaa can be either Ser or Ala.. It catalyses the reaction RNA(n) + a ribonucleoside 5'-triphosphate = RNA(n+1) + diphosphate. The catalysed reaction is a ribonucleoside 5'-triphosphate + H2O = a ribonucleoside 5'-diphosphate + phosphate + H(+). The enzyme catalyses ATP + H2O = ADP + phosphate + H(+). It carries out the reaction a 5'-end (5'-triphosphoguanosine)-ribonucleoside in mRNA + S-adenosyl-L-methionine = a 5'-end (N(7)-methyl 5'-triphosphoguanosine)-ribonucleoside in mRNA + S-adenosyl-L-homocysteine. It catalyses the reaction a 5'-end (N(7)-methyl 5'-triphosphoguanosine)-ribonucleoside in mRNA + S-adenosyl-L-methionine = a 5'-end (N(7)-methyl 5'-triphosphoguanosine)-(2'-O-methyl-ribonucleoside) in mRNA + S-adenosyl-L-homocysteine + H(+). Functionally, plays a role in virus budding by binding to the cell membrane and gathering the viral RNA into a nucleocapsid that forms the core of a mature virus particle. During virus entry, may induce genome penetration into the host cytoplasm after hemifusion induced by the surface proteins. Can migrate to the cell nucleus where it modulates host functions. Inhibits RNA silencing by interfering with host Dicer. Its function is as follows. Prevents premature fusion activity of envelope proteins in trans-Golgi by binding to envelope protein E at pH6.0. After virion release in extracellular space, gets dissociated from E dimers. In terms of biological role, acts as a chaperone for envelope protein E during intracellular virion assembly by masking and inactivating envelope protein E fusion peptide. prM is the only viral peptide matured by host furin in the trans-Golgi network probably to avoid catastrophic activation of the viral fusion activity in acidic Golgi compartment prior to virion release. prM-E cleavage is inefficient, and many virions are only partially matured. These uncleaved prM would play a role in immune evasion. Functionally, may play a role in virus budding. Exerts cytotoxic effects by activating a mitochondrial apoptotic pathway through M ectodomain. May display a viroporin activity. Binds to host cell surface receptor and mediates fusion between viral and cellular membranes. Envelope protein is synthesized in the endoplasmic reticulum in the form of heterodimer with protein prM. They play a role in virion budding in the ER, and the newly formed immature particle is covered with 60 spikes composed of heterodimer between precursor prM and envelope protein E. The virion is transported to the Golgi apparatus where the low pH causes dissociation of PrM-E heterodimers and formation of E homodimers. prM-E cleavage is inefficient, and many virions are only partially matured. These uncleaved prM would play a role in immune evasion. Its function is as follows. Involved in immune evasion, pathogenesis and viral replication. Once cleaved off the polyprotein, is targeted to three destinations: the viral replication cycle, the plasma membrane and the extracellular compartment. Essential for viral replication. Required for formation of the replication complex and recruitment of other non-structural proteins to the ER-derived membrane structures. Excreted as a hexameric lipoparticle that plays a role against host immune response. Antagonizing the complement function. Binds to the host macrophages and dendritic cells. Inhibits signal transduction originating from Toll-like receptor 3 (TLR3). In terms of biological role, component of the viral RNA replication complex that functions in virion assembly and antagonizes the host immune response. Functionally, required cofactor for the serine protease function of NS3. May have membrane-destabilizing activity and form viroporins. Displays three enzymatic activities: serine protease, NTPase and RNA helicase. NS3 serine protease, in association with NS2B, performs its autocleavage and cleaves the polyprotein at dibasic sites in the cytoplasm: C-prM, NS2A-NS2B, NS2B-NS3, NS3-NS4A, NS4A-2K and NS4B-NS5. NS3 RNA helicase binds RNA and unwinds dsRNA in the 3' to 5' direction. Also plays a role in virus assembly. Its function is as follows. Regulates the ATPase activity of the NS3 helicase activity. NS4A allows NS3 helicase to conserve energy during unwinding. In terms of biological role, functions as a signal peptide for NS4B and is required for the interferon antagonism activity of the latter. Functionally, induces the formation of ER-derived membrane vesicles where the viral replication takes place. Inhibits interferon (IFN)-induced host STAT1 phosphorylation and nuclear translocation, thereby preventing the establishment of cellular antiviral state by blocking the IFN-alpha/beta pathway. Replicates the viral (+) and (-) RNA genome, and performs the capping of genomes in the cytoplasm. NS5 methylates viral RNA cap at guanine N-7 and ribose 2'-O positions. Besides its role in RNA genome replication, also prevents the establishment of cellular antiviral state by blocking the interferon-alpha/beta (IFN-alpha/beta) signaling pathway. IFN-I induces binding of NS5 to host IFN-activated transcription factor STAT2, preventing its transcriptional activity. Host TRIM23 is the E3 ligase that interacts with and polyubiquitinates NS5 to promote its binding to STAT2 and trigger IFN-I signaling inhibition. The sequence is that of Genome polyprotein from Yellow fever virus (isolate Ethiopia/Couma/1961) (YFV).